The following is a 513-amino-acid chain: ATP synthase subunit alpha (513 aa).

Position 169 to 176 (169 to 176 (GDRQTGKT)) interacts with ATP.

It belongs to the ATPase alpha/beta chains family. F-type ATPases have 2 components, CF(1) - the catalytic core - and CF(0) - the membrane proton channel. CF(1) has five subunits: alpha(3), beta(3), gamma(1), delta(1), epsilon(1). CF(0) has three main subunits: a(1), b(2) and c(9-12). The alpha and beta chains form an alternating ring which encloses part of the gamma chain. CF(1) is attached to CF(0) by a central stalk formed by the gamma and epsilon chains, while a peripheral stalk is formed by the delta and b chains.

It is found in the cell inner membrane. The catalysed reaction is ATP + H2O + 4 H(+)(in) = ADP + phosphate + 5 H(+)(out). Its function is as follows. Produces ATP from ADP in the presence of a proton gradient across the membrane. The alpha chain is a regulatory subunit. The protein is ATP synthase subunit alpha of Pasteurella multocida (strain Pm70).